A 438-amino-acid polypeptide reads, in one-letter code: MGGCAGSRRRLLDSEEEETAPEPRPPRSYHKGALWKNVMGFWLLGLCNNFSYVVMLSAAHDILSHQRASGNQSHVDPDPPPTAHNSSSRFDCNSVSTAAVLLADILPTLIIKLLAPLGLHLLPYSPRVLVSGICAAGSFILVAFSHSVGTSLCGVVLASISSGVGEVTFLSLTAFYPRAVISWWSSGTGGAGLMGALSYLGLTQAGLSPQHTLLSMLGIPALMLASYFFLLTSPEPQDPGGEEEAETSARQPLIDSETPESKPDSSSNLSLQERWTVFKGLLWYIVPLVLVYFAEYFINQGLFELLFFRNTSLNHAQQYRWYQMLYQAGVFVSRSSLHCCRIRFTWVLALLQCLNLAFLLVDVWFSFLPSIYLVFLIILYEGLLGGAAYVNTFHNIALETSDQHREFAMAAACISDTLGISLSGLLALPLHDFLCHLS.

Residues 1–29 form a disordered region; it reads MGGCAGSRRRLLDSEEEETAPEPRPPRSY. Residues 1-37 are Cytoplasmic-facing; it reads MGGCAGSRRRLLDSEEEETAPEPRPPRSYHKGALWKN. Residue S14 is modified to Phosphoserine. A helical transmembrane segment spans residues 38 to 58; the sequence is VMGFWLLGLCNNFSYVVMLSA. At 59 to 127 the chain is on the lumenal side; the sequence is AHDILSHQRA…GLHLLPYSPR (69 aa). Residues 68–89 are disordered; that stretch reads ASGNQSHVDPDPPPTAHNSSSR. N71 and N85 each carry an N-linked (GlcNAc...) asparagine glycan. A helical transmembrane segment spans residues 128 to 148; it reads VLVSGICAAGSFILVAFSHSV. At 149–151 the chain is on the cytoplasmic side; it reads GTS. A helical membrane pass occupies residues 152–172; sequence LCGVVLASISSGVGEVTFLSL. At 173–182 the chain is on the lumenal side; that stretch reads TAFYPRAVIS. The helical transmembrane segment at 183–203 threads the bilayer; sequence WWSSGTGGAGLMGALSYLGLT. Residues 204–277 are Cytoplasmic-facing; that stretch reads QAGLSPQHTL…NLSLQERWTV (74 aa). Positions 236–267 are disordered; that stretch reads PQDPGGEEEAETSARQPLIDSETPESKPDSSS. Positions 242 to 244 match the Lysosomal targeting motif motif; that stretch reads EEE. A Lysosomal targeting motif. Required for AP1G1, AP2A2 and AP3D1 interaction motif is present at residues 253–254; it reads LI. A helical transmembrane segment spans residues 278 to 298; it reads FKGLLWYIVPLVLVYFAEYFI. At 299-346 the chain is on the lumenal side; it reads NQGLFELLFFRNTSLNHAQQYRWYQMLYQAGVFVSRSSLHCCRIRFTW. An N-linked (GlcNAc...) asparagine glycan is attached at N310. Residues 347–367 form a helical membrane-spanning segment; it reads VLALLQCLNLAFLLVDVWFSF. Topologically, residues 368–438 are cytoplasmic; sequence LPSIYLVFLI…PLHDFLCHLS (71 aa). The Lysosomal targeting motif motif lies at 409-419; it reads MAAACISDTLG. Residue C435 is modified to Cysteine methyl ester. C435 is lipidated: S-farnesyl cysteine. The propeptide at 436 to 438 is removed in mature form; sequence HLS.

Belongs to the battenin family. As to quaternary structure, interacts with DCTN1, KIF3A, RAB7A and RILP. Interacts with CLN5. Post-translationally, highly glycosylated. In terms of processing, farnesylation is important for trafficking to lysosomes.

Its subcellular location is the lysosome membrane. The protein localises to the late endosome. It is found in the lysosome. In terms of biological role, mediates microtubule-dependent, anterograde transport connecting the Golgi network, endosomes, autophagosomes, lysosomes and plasma membrane, and participates in several cellular processes such as regulation of lysosomal pH, lysosome protein degradation, receptor-mediated endocytosis, autophagy, transport of proteins and lipids from the TGN, apoptosis and synaptic transmission. Facilitates the proteins transport from trans-Golgi network (TGN)-to other membrane compartments such as transport of microdomain-associated proteins to the plasma membrane, IGF2R transport to the lysosome where it regulates the CTSD release leading to regulation of CTSD maturation and thereby APP intracellular processing. Moreover regulates CTSD activity in response to osmotic stress. Also binds galactosylceramide and transports it from the trans Golgi to the rafts, which may have immediate and downstream effects on cell survival by modulating ceramide synthesis. At the plasma membrane, regulates actin-dependent events including filopodia formation, cell migration, and pinocytosis through ARF1-CDC42 pathway and also the cytoskeleton organization through interaction with MYH10 and fodrin leading to the regulation of the plasma membrane association of Na+, K+ ATPase complex. Regulates synaptic transmission in the amygdala, hippocampus, and cerebellum through regulation of synaptic vesicles density and their proximity to active zones leading to modulation of short-term plasticity and age-dependent anxious behavior, learning and memory. Regulates autophagic vacuoles (AVs) maturation by modulating the trafficking between endocytic and autophagolysosomal/lysosomal compartments, which involves vesicle fusion leading to regulation of degradation process. Also participates in cellular homeostasis of compounds such as, water, ions, amino acids, proteins and lipids in several tissue namely in brain and kidney through regulation of their transport and synthesis. The chain is Battenin from Canis lupus familiaris (Dog).